The sequence spans 514 residues: MTPMYPELLTDLVTDLPHAVRLQRLVSGLRTHFRCGAVALLRLEEEHLRPVAVDGLVRDTLGRRFAVSLHPRLAAILARRDVTCFHHDSMLPDPYDGLIDEHVGEPLPVHDCMGTSLHLDGRPWGVLTLDALTVGTFDAAAQAELQRLTVIVEAAIRTTRLEAEIRALQLARGKQPDGEGPADDGEIIGQSQAIAGLLHELEVVADTDLPVLLLGETGVGKELFAHRLHRHSRRRGHPLVHVNCAALPESLAESELFGHARGAFSGATGERPGRFEAAAGGTLFLDEVGELPLSIQAKLLRTLQNGEIQRLGSDRPRRVNVRVIAATNRNLREHVRDGSFRADLFHRLSVYPIPIPPLRERGNDVLLLAGRFLELNRARLGMRSLRLSAAAQDALRRYRWPGNVRELEHVISRAALRCVSRGADRNDIVTLEAELLDLDGLELPAGSAHHAAEAAIAHPALPTGATLREAVEQTQRACIEQALRAHDGSWAKAARQLGMDASNLHKLAKRLGSK.

Position 54 is a 4-aspartylphosphate (aspartate 54). One can recognise a Sigma-54 factor interaction domain in the interval 187-416 (IIGQSQAIAG…LEHVISRAAL (230 aa)). Residues 215–222 (GETGVGKE) and 287–296 (EVGELPLSIQ) each bind ATP. A DNA-binding region (H-T-H motif) is located at residues 490 to 509 (WAKAARQLGMDASNLHKLAK).

The protein operates within nitrogen metabolism; nitrate reduction (denitrification) [regulation]. Its function is as follows. Required for the nitric oxide (NO) induced expression of NO reductase. Not required for expression of 2 other pathway members, nitrate reductase (nirS) and nitrous oxide reductase (nosZ). The chain is Nitric oxide reductase transcription regulator NorR1 (norR1) from Cupriavidus necator (strain ATCC 17699 / DSM 428 / KCTC 22496 / NCIMB 10442 / H16 / Stanier 337) (Ralstonia eutropha).